We begin with the raw amino-acid sequence, 911 residues long: Ribonuclease J (911 aa).

A chloroplast-targeting transit peptide spans 1-70 (MMKPASLQGF…VTSAPASGTS (70 aa)). A disordered region spans residues 58 to 90 (SCSVTSAPASGTSSSSKTPRRRSGRLEGVGKSM). The segment covering 63–74 (SAPASGTSSSSK) has biased composition (low complexity). Zn(2+) contacts are provided by histidine 175, histidine 177, aspartate 179, histidine 180, histidine 245, and aspartate 267. Substrate is bound by residues 336–338 (ASN) and 468–472 (HTSGH). Histidine 494 contacts Zn(2+). Disordered stretches follow at residues 695–723 (VEGNDKRSRAKKAPSQEASPKEVDRTLED) and 735–824 (EETA…WKPE). Composition is skewed to basic and acidic residues over residues 713-722 (SPKEVDRTLE) and 783-795 (ADTEPKAEGKENS). Positions 796 to 806 (RDDDELADASD) are enriched in acidic residues. The region spanning 813–877 (PKRVRKNKWK…QCKSLWASLI (65 aa)) is the Myb-like domain.

It belongs to the metallo-beta-lactamase superfamily. RNA-metabolizing metallo-beta-lactamase-like family. Bacterial RNase J subfamily. In terms of assembly, homodimer. May be a subunit of the RNA degradosome. It depends on Zn(2+) as a cofactor. As to expression, moslty expressed in inflorescences, seedlings, leaves, flowers and flower buds, and, to a lower extent, in stems, siliques and roots.

It localises to the plastid. It is found in the chloroplast. Functionally, essential protein required during embryogenesis, especially in initiating and maintaining the organization of shoot apical meristems (SAMs), cotyledons, and hypocotyls. Involved in auxin-mediated pathways during embryogenesis. RNase that has both endonuclease and 5'-3' exonuclease activities. Involved in RNA surveillance to prevent overaccumulation of antisense RNA. Probably involved in maturation of rRNA and in some organisms also mRNA maturation and/or decay. This is Ribonuclease J from Arabidopsis thaliana (Mouse-ear cress).